Reading from the N-terminus, the 338-residue chain is MASPPILSRESPVLGLEEEKKSDGGNSEVNIDPSASSSLKEDVDGEEGADTKIDPHLLEEDDLNPVEDYDSKNQKVVEASKLDLDATSTVWAESLSINREASISQSGIVDNEMEKKVEEEEEFDEFDDFGEFEHDIPICTFMGDWQDDFQDAVNSVFGLPETPKTIEESSLDPDRILSLWQKLIEMPVLQRPDWLRSSIRHIFLVTMGLPVDLDELLPTPSTQGSFNSSRTIELSSVTLPKSEDEPYLDYSAARRLCSINKDALTHRSHESLQQHIELLESTLQQAVEVARYWTDKRDSALSDKLLYETVVDDLVQHSKRLRNSGRKFLSRRSTSSHK.

A disordered region spans residues 1–72; sequence MASPPILSRE…LNPVEDYDSK (72 aa). A compositionally biased stretch (polar residues) spans 24–38; the sequence is GGNSEVNIDPSASSS. Residues 49-58 show a composition bias toward basic and acidic residues; that stretch reads ADTKIDPHLL. The segment covering 59–68 has biased composition (acidic residues); that stretch reads EEDDLNPVED.

It is found in the cytoplasm. The protein resides in the nucleus. This is an uncharacterized protein from Schizosaccharomyces pombe (strain 972 / ATCC 24843) (Fission yeast).